The primary structure comprises 839 residues: Phenylalanine--tRNA ligase beta subunit (839 aa).

The 125-residue stretch at 42 to 166 (GELTGPIVIG…PPSVEGHQLV (125 aa)) folds into the tRNA-binding domain. A B5 domain is found at 421–496 (PEMPRQTINA…RKIGFDRIKA (76 aa)). Positions 474, 480, 483, and 484 each coordinate Mg(2+). The FDX-ACB domain maps to 745–838 (SSFPVAKEDV…AEETCGAQLR (94 aa)).

Belongs to the phenylalanyl-tRNA synthetase beta subunit family. Type 1 subfamily. Tetramer of two alpha and two beta subunits. Requires Mg(2+) as cofactor.

It localises to the cytoplasm. The enzyme catalyses tRNA(Phe) + L-phenylalanine + ATP = L-phenylalanyl-tRNA(Phe) + AMP + diphosphate + H(+). In Cutibacterium acnes (strain DSM 16379 / KPA171202) (Propionibacterium acnes), this protein is Phenylalanine--tRNA ligase beta subunit.